Here is a 385-residue protein sequence, read N- to C-terminus: tRNA pseudouridine synthase D (385 aa).

Catalysis depends on aspartate 86, which acts as the Nucleophile. The TRUD domain occupies 165–305 (GFPNYFGNQR…TRFLQKDIAP (141 aa)).

It belongs to the pseudouridine synthase TruD family.

It catalyses the reaction uridine(13) in tRNA = pseudouridine(13) in tRNA. In terms of biological role, responsible for synthesis of pseudouridine from uracil-13 in transfer RNAs. The protein is tRNA pseudouridine synthase D of Helicobacter hepaticus (strain ATCC 51449 / 3B1).